The sequence spans 170 residues: Arginine repressor (170 aa).

The protein belongs to the ArgR family.

The protein resides in the cytoplasm. It functions in the pathway amino-acid biosynthesis; L-arginine biosynthesis [regulation]. Its function is as follows. Regulates arginine biosynthesis genes. This is Arginine repressor from Mycobacterium tuberculosis (strain ATCC 25177 / H37Ra).